Reading from the N-terminus, the 353-residue chain is Photosystem II D2 protein (353 aa).

Thr2 bears the N-acetylthreonine mark. At Thr2 the chain carries Phosphothreonine. A helical membrane pass occupies residues 41 to 61 (CAYFALGGWFTGTTFVTSWYT). His118 is a chlorophyll a binding site. A helical membrane pass occupies residues 125–141 (GFMLRQFELARSVQLRP). Pheophytin a is bound by residues Gln130 and Asn143. A helical transmembrane segment spans residues 153 to 166 (VFVSVFLIYPLGQS). His198 is a chlorophyll a binding site. A helical membrane pass occupies residues 208 to 228 (AALLCAIHGATVENTLFEDGD). A plastoquinone is bound by residues His215 and Phe262. Residue His215 coordinates Fe cation. His269 is a binding site for Fe cation. Residues 279 to 295 (GLWMSAIGVVGLALNLR) form a helical membrane-spanning segment.

This sequence belongs to the reaction center PufL/M/PsbA/D family. In terms of assembly, PSII is composed of 1 copy each of membrane proteins PsbA, PsbB, PsbC, PsbD, PsbE, PsbF, PsbH, PsbI, PsbJ, PsbK, PsbL, PsbM, PsbT, PsbX, PsbY, PsbZ, Psb30/Ycf12, at least 3 peripheral proteins of the oxygen-evolving complex and a large number of cofactors. It forms dimeric complexes. It depends on The D1/D2 heterodimer binds P680, chlorophylls that are the primary electron donor of PSII, and subsequent electron acceptors. It shares a non-heme iron and each subunit binds pheophytin, quinone, additional chlorophylls, carotenoids and lipids. There is also a Cl(-1) ion associated with D1 and D2, which is required for oxygen evolution. The PSII complex binds additional chlorophylls, carotenoids and specific lipids. as a cofactor.

Its subcellular location is the plastid. The protein resides in the chloroplast thylakoid membrane. It catalyses the reaction 2 a plastoquinone + 4 hnu + 2 H2O = 2 a plastoquinol + O2. Its function is as follows. Photosystem II (PSII) is a light-driven water:plastoquinone oxidoreductase that uses light energy to abstract electrons from H(2)O, generating O(2) and a proton gradient subsequently used for ATP formation. It consists of a core antenna complex that captures photons, and an electron transfer chain that converts photonic excitation into a charge separation. The D1/D2 (PsbA/PsbD) reaction center heterodimer binds P680, the primary electron donor of PSII as well as several subsequent electron acceptors. D2 is needed for assembly of a stable PSII complex. This Pinus thunbergii (Japanese black pine) protein is Photosystem II D2 protein.